The following is a 358-amino-acid chain: 2'-5'-oligoadenylate synthase 1A (358 aa).

The interaction with dsRNA stretch occupies residues 14–61 (DKFIEVYLLPNTSFRDDVKSAINVLCDFLKERCFRDTVHPVRVSKVVK). Residue Ser64 participates in ATP binding. Mg(2+) is bound by residues Asp76, Asp78, and Asp149. Residues 201-211 (QRPTKLKSLIR) are interaction with dsRNA. 3 residues coordinate ATP: Arg211, Lys214, and Gln231.

It belongs to the 2-5A synthase family. As to quaternary structure, monomer. Homotetramer. Interacts with OAS1D. Mg(2+) is required as a cofactor.

The protein localises to the cytoplasm. Its subcellular location is the mitochondrion. It is found in the nucleus. The protein resides in the microsome. It localises to the endoplasmic reticulum. It catalyses the reaction 3 ATP = 5'-triphosphoadenylyl-(2'-&gt;5')-adenylyl-(2'-&gt;5')-adenosine + 2 diphosphate. Produced as a latent enzyme which is activated by dsRNA generated during the course of viral infection. The dsRNA activator must be at least 15 nucleotides long, and no modification of the 2'-hydroxyl group is tolerated. ssRNA or dsDNA do not act as activators. Interferon-induced, dsRNA-activated antiviral enzyme which plays a critical role in cellular innate antiviral response. In addition, it may also play a role in other cellular processes such as apoptosis, cell growth, differentiation and gene regulation. Synthesizes higher oligomers of 2'-5'-oligoadenylates (2-5A) from ATP which then bind to the inactive monomeric form of ribonuclease L (RNase L) leading to its dimerization and subsequent activation. Activation of RNase L leads to degradation of cellular as well as viral RNA, resulting in the inhibition of protein synthesis, thus terminating viral replication. Can mediate the antiviral effect via the classical RNase L-dependent pathway or an alternative antiviral pathway independent of RNase L. The protein is 2'-5'-oligoadenylate synthase 1A (Oas1a) of Rattus norvegicus (Rat).